A 94-amino-acid polypeptide reads, in one-letter code: Protein SKIP34 (94 aa).

The disordered stretch occupies residues 1–27 (MCYGHNQSLSSRSSLRRRSHDGEDDSV). Residues 23–61 (EDDSVVDDLRDRLAETEARLRRARAREAELSRRLEHMKR) adopt a coiled-coil conformation.

In terms of assembly, interacts with SPK1B/ASK2.

This chain is Protein SKIP34 (SKIP34), found in Arabidopsis thaliana (Mouse-ear cress).